The following is a 64-amino-acid chain: Large ribosomal subunit protein bL35 (64 aa).

A compositionally biased stretch (basic residues) spans 1–17 (MKQKTHSGIKKRIKKTG). The interval 1–64 (MKQKTHSGIK…KRVNRLLGEG (64 aa)) is disordered. The segment covering 21–33 (LRREQANRRHLLE) has biased composition (basic and acidic residues).

It belongs to the bacterial ribosomal protein bL35 family.

The chain is Large ribosomal subunit protein bL35 from Corynebacterium kroppenstedtii (strain DSM 44385 / JCM 11950 / CIP 105744 / CCUG 35717).